Consider the following 1442-residue polypeptide: ABC transporter G family member 11 (1442 aa).

The ABC transporter 1 domain maps to 125 to 373; sequence LFTPSFWTKK…FMSLGFDCEP (249 aa). The ABC transmembrane type-2 1 domain maps to 478–718; the sequence is LNDKFGMYSK…EQGSLYFKGD (241 aa). Helical transmembrane passes span 482 to 502, 518 to 538, 567 to 587, 592 to 612, 627 to 647, and 737 to 757; these read FGMY…ASLF, AILS…AMTF, IPFT…MFGL, GKFF…TALF, NISN…IPIP, and IIVY…MEYI. Positions 808-1052 constitute an ABC transporter 2 domain; it reads FTWQNIRYTV…LTSYFERHGV (245 aa). ATP is bound at residue 844-851; that stretch reads GSSGAGKT. Residues 1144-1369 enclose the ABC transmembrane type-2 2 domain; sequence YYTYGSFVQA…YNTCQNYTSA (226 aa). 6 consecutive transmembrane segments (helical) span residues 1147-1167, 1181-1201, 1220-1240, 1259-1279, 1286-1306, and 1416-1436; these read YGSF…FWNL, IFEA…QLII, FAIS…TIFF, FYFW…GQAV, MFFA…FCGV, and VGII…FVYL.

It belongs to the ABC transporter superfamily. ABCG family. PDR (TC 3.A.1.205) subfamily.

The protein resides in the membrane. The chain is ABC transporter G family member 11 (abcG11) from Dictyostelium discoideum (Social amoeba).